Consider the following 375-residue polypeptide: DNA replication and repair protein RecF (375 aa).

Position 30 to 37 (30 to 37) interacts with ATP; that stretch reads GLNGQGKT.

This sequence belongs to the RecF family.

The protein resides in the cytoplasm. The RecF protein is involved in DNA metabolism; it is required for DNA replication and normal SOS inducibility. RecF binds preferentially to single-stranded, linear DNA. It also seems to bind ATP. In Halothermothrix orenii (strain H 168 / OCM 544 / DSM 9562), this protein is DNA replication and repair protein RecF.